The sequence spans 159 residues: Nucleotide-binding protein PSPTO_4393 (159 aa).

Belongs to the YajQ family.

Nucleotide-binding protein. The chain is Nucleotide-binding protein PSPTO_4393 from Pseudomonas syringae pv. tomato (strain ATCC BAA-871 / DC3000).